The sequence spans 388 residues: Lipid-A-disaccharide synthase (388 aa).

This sequence belongs to the LpxB family.

The catalysed reaction is a lipid X + a UDP-2-N,3-O-bis[(3R)-3-hydroxyacyl]-alpha-D-glucosamine = a lipid A disaccharide + UDP + H(+). It functions in the pathway bacterial outer membrane biogenesis; LPS lipid A biosynthesis. Functionally, condensation of UDP-2,3-diacylglucosamine and 2,3-diacylglucosamine-1-phosphate to form lipid A disaccharide, a precursor of lipid A, a phosphorylated glycolipid that anchors the lipopolysaccharide to the outer membrane of the cell. In Saccharophagus degradans (strain 2-40 / ATCC 43961 / DSM 17024), this protein is Lipid-A-disaccharide synthase.